The following is a 108-amino-acid chain: Large ribosomal subunit protein bL21 (108 aa).

Belongs to the bacterial ribosomal protein bL21 family. In terms of assembly, part of the 50S ribosomal subunit. Contacts protein L20.

In terms of biological role, this protein binds to 23S rRNA in the presence of protein L20. This Buchnera aphidicola subsp. Acyrthosiphon pisum (strain 5A) protein is Large ribosomal subunit protein bL21.